Here is a 218-residue protein sequence, read N- to C-terminus: Large ribosomal subunit protein uL3 (218 aa).

The segment at 132 to 152 (FKGQGASHGTQAVHRRPGSIG) is disordered.

It belongs to the universal ribosomal protein uL3 family. In terms of assembly, part of the 50S ribosomal subunit. Forms a cluster with proteins L14 and L19.

Functionally, one of the primary rRNA binding proteins, it binds directly near the 3'-end of the 23S rRNA, where it nucleates assembly of the 50S subunit. The sequence is that of Large ribosomal subunit protein uL3 from Rhodococcus erythropolis (strain PR4 / NBRC 100887).